We begin with the raw amino-acid sequence, 514 residues long: Maltose/maltodextrin transport system permease protein MalF (514 aa).

At 1 to 16 (MDVIKKKHWWQSDALK) the chain is on the cytoplasmic side. The helical transmembrane segment at 17-36 (WSVLGLLGLLVGYLVVLMYA) threads the bilayer. Residues 37-39 (QGE) are Periplasmic-facing. Residues 40 to 57 (YLFAITTLILSSAGLYIF) traverse the membrane as a helical segment. The Cytoplasmic portion of the chain corresponds to 58–69 (ANRKAYAWRYVY). A helical membrane pass occupies residues 70–92 (PGMAGMGLFVLFPLVCTIAIAFT). Residues 93–283 (NYSSTNQLTF…QKPFLAIFVW (191 aa)) lie on the Periplasmic side of the membrane. The ABC transmembrane type-1 domain occupies 281–505 (FVWTVVFSLI…LLVGALAIVN (225 aa)). Residues 284–306 (TVVFSLITVFLTVAVGMVLACLV) traverse the membrane as a helical segment. Residues 307–318 (QWEALRGKAVYR) are Cytoplasmic-facing. The chain crosses the membrane as a helical span at residues 319-341 (VLLILPYAVPSFISILIFKGLFN). At 342-369 (QSFGEINMMLSALFGVKPAWFSDPTTAR) the chain is on the periplasmic side. A helical transmembrane segment spans residues 370–392 (TMLIIVNTWLGYPYMMILCMGLL). Residues 393–412 (KAIPDDLYEASAMDGAGPFQ) are Cytoplasmic-facing. The chain crosses the membrane as a helical span at residues 413 to 435 (NFFKITLPLLIKPLTPLMIASFA). Topologically, residues 436–483 (FNFNNFVLIQLLTNGGPDRLGTTTPAGYTDLLVNYTYRIAFEGGGGQD) are periplasmic. A helical membrane pass occupies residues 484–506 (FGLAAAIATLIFLLVGALAIVNL). Topologically, residues 507–514 (KATRMKFD) are cytoplasmic.

It belongs to the binding-protein-dependent transport system permease family. MalFG subfamily. The complex is composed of two ATP-binding proteins (MalK), two transmembrane proteins (MalG and MalF) and a solute-binding protein (MalE).

The protein resides in the cell inner membrane. In terms of biological role, part of the ABC transporter complex MalEFGK involved in maltose/maltodextrin import. Probably responsible for the translocation of the substrate across the membrane. This chain is Maltose/maltodextrin transport system permease protein MalF (malF), found in Escherichia coli O157:H7.